Reading from the N-terminus, the 618-residue chain is uncharacterized protein (618 aa).

To Rhizobium NGR234A y4qD.

This is an uncharacterized protein from Sinorhizobium fredii (strain NBRC 101917 / NGR234).